The following is a 657-amino-acid chain: Methionine--tRNA ligase (657 aa).

Positions 13 to 23 (YYPSGNLHIGH) match the 'HIGH' region motif. The 'KMSKS' region signature appears at 308 to 312 (KMSKS). Lys311 is an ATP binding site. Residues 557-657 (DFDKVEIKAA…SAIPNGAVIK (101 aa)) form the tRNA-binding domain.

It belongs to the class-I aminoacyl-tRNA synthetase family. MetG type 2B subfamily. As to quaternary structure, homodimer.

Its subcellular location is the cytoplasm. It carries out the reaction tRNA(Met) + L-methionine + ATP = L-methionyl-tRNA(Met) + AMP + diphosphate. Is required not only for elongation of protein synthesis but also for the initiation of all mRNA translation through initiator tRNA(fMet) aminoacylation. In Staphylococcus aureus (strain COL), this protein is Methionine--tRNA ligase.